The chain runs to 1075 residues: DNA-directed RNA polymerase subunit beta (1075 aa).

The protein belongs to the RNA polymerase beta chain family. In terms of assembly, in plastids the minimal PEP RNA polymerase catalytic core is composed of four subunits: alpha, beta, beta', and beta''. When a (nuclear-encoded) sigma factor is associated with the core the holoenzyme is formed, which can initiate transcription.

It localises to the plastid. It is found in the chloroplast. The enzyme catalyses RNA(n) + a ribonucleoside 5'-triphosphate = RNA(n+1) + diphosphate. DNA-dependent RNA polymerase catalyzes the transcription of DNA into RNA using the four ribonucleoside triphosphates as substrates. The sequence is that of DNA-directed RNA polymerase subunit beta from Saccharum hybrid (Sugarcane).